Here is a 78-residue protein sequence, read N- to C-terminus: MATLIEVRDLLALSGRMDAQRISEQLATPMPLVNAMLSRLEAMGKAERQEEWLSGCLSGSCRHCPEGKACRKEVWQLR.

Residues C56, C61, C64, and C70 each contribute to the iron-sulfur cluster site.

Belongs to the FeoC family.

Functionally, may function as a transcriptional regulator that controls feoABC expression. The chain is Probable [Fe-S]-dependent transcriptional repressor from Cronobacter sakazakii (strain ATCC BAA-894) (Enterobacter sakazakii).